The chain runs to 1077 residues: Receptor-type guanylate cyclase daf-11 (1077 aa).

4 N-linked (GlcNAc...) asparagine glycosylation sites follow: N14, N112, N149, and N311. A helical transmembrane segment spans residues 335–355 (TGVIIAIAVIMGVLLMFIIIL). The Protein kinase domain occupies 355–695 (LTTIRKCCNG…LARKIIDTVL (341 aa)). Residues 356 to 1077 (TTIRKCCNGS…DSQASTIPDN (722 aa)) lie on the Cytoplasmic side of the membrane. The Guanylate cyclase domain occupies 765-895 (TILYSDIVGF…EAVILASKME (131 aa)). Residues D770, I771, and D814 each contribute to the Mg(2+) site. A coiled-coil region spans residues 983–1034 (KDKMTLAKEKVIAERKNEEERLQRQQTLQEALEEHEEEIEMNEVLVDEDEGE). Residues 1048–1077 (TQMEELEDEPAGRTIGHGRLDSQASTIPDN) are disordered.

This sequence belongs to the adenylyl cyclase class-4/guanylyl cyclase family. As to expression, expressed in sensory neurons including ASI, ASJ, ASK, AWB and AWC. Expressed in ASJ neurons in the dauer stage.

It localises to the cell membrane. The protein localises to the cell projection. The protein resides in the dendrite. It is found in the cilium. Its subcellular location is the perikaryon. The catalysed reaction is GTP = 3',5'-cyclic GMP + diphosphate. Guanylate cyclase involved in the production of the second messenger cGMP. In addition, regulates cGMP levels by controlling the transcription of 3',5'-cyclic phosphodiesterase pde-1 and pde-5 mRNAs. Involved in the olfactory, light and pheromone sensing pathways. Part of the chemosensory mechanism of the ASJ sensory neuron that controls dauer formation and dauer recovery. Promotes the calcium flux in ASJ sensory neurons in response to onset and removal of a nitric oxide (NO) stimulus and is thereby required for the behavioral avoidance response to NO-producing organisms like P.aeruginosa. In ASI and ASJ sensory neurons, controls dauer formation and behavioral response to P.aeruginosa by up-regulating the transcription of daf-7, a member of the TGF-beta family. Required for the chemotaxis responses to non-volatile and volatile attractants mediated by the sensory neurons ASE and AWC respectively. Required in ASJ neurons for phototransduction downstream of G protein coupled-photoreceptor lite-1. Plays a role in the development of ASJ sensory neuron axons during late larval stages and in the maintenance of normal axon morphology in adults. Required to maintain the expression of putative olfactory receptor str-2 in one of the two AWC neurons in adults. Regulates, via the production of cGMP, lifespan (in some environmental conditions), sensitivity to oxidative stress and entry into quiescence triggered by satiety. In AWB and AWC sensory neurons, mediates the recognition of food odors which subsequently allows for the detection of preferred food sources. In Caenorhabditis elegans, this protein is Receptor-type guanylate cyclase daf-11.